We begin with the raw amino-acid sequence, 134 residues long: Large ribosomal subunit protein uL16c (134 aa).

It belongs to the universal ribosomal protein uL16 family. Part of the 50S ribosomal subunit.

The protein localises to the plastid. It localises to the chloroplast. The protein is Large ribosomal subunit protein uL16c of Gnetum parvifolium (Small-leaved jointfir).